The primary structure comprises 97 residues: DNA-directed RNA polymerase subunit omega (97 aa).

Positions 1 to 16 (MSTPNALAAFNSSPSL) are enriched in polar residues. The interval 1-21 (MSTPNALAAFNSSPSLNAPEG) is disordered.

The protein belongs to the RNA polymerase subunit omega family. In terms of assembly, the RNAP catalytic core consists of 2 alpha, 1 beta, 1 beta' and 1 omega subunit. When a sigma factor is associated with the core the holoenzyme is formed, which can initiate transcription.

The catalysed reaction is RNA(n) + a ribonucleoside 5'-triphosphate = RNA(n+1) + diphosphate. Promotes RNA polymerase assembly. Latches the N- and C-terminal regions of the beta' subunit thereby facilitating its interaction with the beta and alpha subunits. This is DNA-directed RNA polymerase subunit omega from Saccharopolyspora erythraea (strain ATCC 11635 / DSM 40517 / JCM 4748 / NBRC 13426 / NCIMB 8594 / NRRL 2338).